We begin with the raw amino-acid sequence, 204 residues long: MTFKGFSKKDFKTMQIPGLEARMSGIQTDIQPKFRAVGEELTTYLSAKLGDEMFLHIARHQRRSVNPPESTWLAICHDKRGYKKHPHFQVGLFDNYLFIWLAFIYENEESKKIANRFLKEKKLLADLPDSFAISPDHTEEKTYPVHDGQLKATLERFRDVKKGEFLVGKIYLPDDSHLSPGKDFIKEAEMVLDELIPLYKASLQ.

Belongs to the UPF0637 family.

The chain is UPF0637 protein LMHCC_1566 from Listeria monocytogenes serotype 4a (strain HCC23).